The chain runs to 102 residues: Small ribosomal subunit protein uS10 (102 aa).

Belongs to the universal ribosomal protein uS10 family. As to quaternary structure, part of the 30S ribosomal subunit.

Functionally, involved in the binding of tRNA to the ribosomes. This Thermococcus gammatolerans (strain DSM 15229 / JCM 11827 / EJ3) protein is Small ribosomal subunit protein uS10.